Here is a 351-residue protein sequence, read N- to C-terminus: Glycerol-3-phosphate dehydrogenase [NAD(P)+] (351 aa).

Residues S12, W13, H33, and K114 each coordinate NADPH. Sn-glycerol 3-phosphate contacts are provided by K114, G145, and S147. A149 contacts NADPH. Sn-glycerol 3-phosphate contacts are provided by K200, D253, S263, R264, and N265. K200 (proton acceptor) is an active-site residue. R264 lines the NADPH pocket. Positions 288 and 290 each coordinate NADPH.

It belongs to the NAD-dependent glycerol-3-phosphate dehydrogenase family.

Its subcellular location is the cytoplasm. The enzyme catalyses sn-glycerol 3-phosphate + NAD(+) = dihydroxyacetone phosphate + NADH + H(+). It carries out the reaction sn-glycerol 3-phosphate + NADP(+) = dihydroxyacetone phosphate + NADPH + H(+). Its pathway is membrane lipid metabolism; glycerophospholipid metabolism. In terms of biological role, catalyzes the reduction of the glycolytic intermediate dihydroxyacetone phosphate (DHAP) to sn-glycerol 3-phosphate (G3P), the key precursor for phospholipid synthesis. This chain is Glycerol-3-phosphate dehydrogenase [NAD(P)+], found in Lacticaseibacillus casei (strain BL23) (Lactobacillus casei).